The primary structure comprises 142 residues: MSHLPILLLLLLVSPGLQAAPTQTMPLKTTQVNCSNLREEIVTLLNQPPLASSNFNNLNREDQRILMKPNLRKPNLEAFQKAVKSLQNAAAIESNLKDLPVCLPTATNAATQHPIRIKDGDWNDFQMKLKFYLKTLEIKQPQ.

The signal sequence occupies residues 1 to 18 (MSHLPILLLLLLVSPGLQ). An N-linked (GlcNAc...) asparagine glycan is attached at asparagine 33. Residues cysteine 34 and cysteine 102 are joined by a disulfide bond.

Belongs to the IL-3 family. As to quaternary structure, monomer. Activated T-cells, mast cells, natural killer cells.

Its subcellular location is the secreted. Functionally, granulocyte/macrophage colony-stimulating factors are cytokines that act in hematopoiesis by controlling the production, differentiation, and function of 2 related white cell populations of the blood, the granulocytes and the monocytes-macrophages. Its function is as follows. This CSF induces granulocytes, macrophages, mast cells, stem cells, erythroid cells, eosinophils and megakaryocytes. The sequence is that of Interleukin-3 (IL3) from Callithrix jacchus (White-tufted-ear marmoset).